The chain runs to 215 residues: MTFNIIKLENWDRKEYFEHYFNQQTTYSITKEIDITLFKDMIKKKGYEIYPSLIYAIMEVVNKNKVFRTGINSENKLGYWDKLNPLYTVFNKQTEKFTNIWTESDNNFTSFYNNYKNDLLEYKDKEEMFPKKPIPENTIPISMIPWIDFSSFNLNIGNNSNFLLPIITIGKFYSENNKIYIPVALQLHHAVCDGYHASLFMNEFQDIIHKVDDWI.

H189 (proton acceptor) is an active-site residue.

Belongs to the chloramphenicol acetyltransferase family. In terms of assembly, homotrimer.

It catalyses the reaction chloramphenicol + acetyl-CoA = chloramphenicol 3-acetate + CoA. This enzyme is an effector of chloramphenicol resistance in bacteria. The polypeptide is Chloramphenicol acetyltransferase (cat) (Staphylococcus aureus).